Here is a 664-residue protein sequence, read N- to C-terminus: Degenerin del-1 (664 aa).

Topologically, residues 1–67 (MARKYIDILK…IFTTSLYWVR (67 aa)) are cytoplasmic. Residues 68-88 (FLWVVVSLVCICLCMYSFSHV) form a helical membrane-spanning segment. Residues 89–607 (KDKYDRKEKI…WFNLMADMGG (519 aa)) lie on the Extracellular side of the membrane. N-linked (GlcNAc...) asparagine glycans are attached at residues N241, N300, N394, N508, and N562. Residues 608–628 (QAGLFLGASIMSVIEFLFFAV) form a helical membrane-spanning segment. Over 629 to 664 (RTLGIACKPRRWRQKTELLRAEELNDAEKGVSTNNN) the chain is Cytoplasmic.

The protein belongs to the amiloride-sensitive sodium channel (TC 1.A.6) family.

Its subcellular location is the membrane. Its function is as follows. Probable sodium channel subunit. The sequence is that of Degenerin del-1 (del-1) from Caenorhabditis elegans.